The following is an 88-amino-acid chain: UPF0367 protein AM1_1885 (88 aa).

The protein belongs to the UPF0367 family.

This is UPF0367 protein AM1_1885 from Acaryochloris marina (strain MBIC 11017).